An 843-amino-acid polypeptide reads, in one-letter code: Translation initiation factor IF-2 (843 aa).

Disordered regions lie at residues alanine 55–aspartate 185 and lysine 209–valine 228. The segment covering proline 62–glutamate 106 has biased composition (basic and acidic residues). Basic residues predominate over residues leucine 114–proline 128. A compositionally biased stretch (basic and acidic residues) spans lysine 129–glutamine 141. Residues leucine 156–lysine 165 are compositionally biased toward basic residues. Basic and acidic residues-rich tracts occupy residues lysine 171 to aspartate 185 and lysine 209 to lysine 221. Residues glutamate 342–lysine 511 form the tr-type G domain. Residues glycine 351–threonine 358 are G1. Glycine 351 to threonine 358 is a GTP binding site. The tract at residues glycine 376 to histidine 380 is G2. The tract at residues aspartate 397 to glycine 400 is G3. GTP contacts are provided by residues aspartate 397–histidine 401 and asparagine 451–aspartate 454. A G4 region spans residues asparagine 451–aspartate 454. The segment at serine 487–lysine 489 is G5.

The protein belongs to the TRAFAC class translation factor GTPase superfamily. Classic translation factor GTPase family. IF-2 subfamily.

The protein resides in the cytoplasm. In terms of biological role, one of the essential components for the initiation of protein synthesis. Protects formylmethionyl-tRNA from spontaneous hydrolysis and promotes its binding to the 30S ribosomal subunits. Also involved in the hydrolysis of GTP during the formation of the 70S ribosomal complex. The polypeptide is Translation initiation factor IF-2 (Nitratiruptor sp. (strain SB155-2)).